The sequence spans 930 residues: Endoplasmic reticulum aminopeptidase 1 (930 aa).

At 1–2 (MP) the chain is on the cytoplasmic side. A helical; Signal-anchor for type II membrane protein membrane pass occupies residues 3–23 (SLLSLVLTFLAVSSPSCCQNS). Topologically, residues 24-930 (DTASPKASNG…WLQKERQELL (907 aa)) are lumenal. Residues Asn-59 and Asn-143 are each glycosylated (N-linked (GlcNAc...) asparagine). Substrate is bound by residues Glu-172 and 306–310 (GAMEN). His-342 contributes to the Zn(2+) binding site. Residue Glu-343 is the Proton acceptor of the active site. The Zn(2+) site is built by His-346 and Glu-365. A disulfide bridge connects residues Cys-393 and Cys-432. N-linked (GlcNAc...) asparagine glycosylation is found at Asn-403 and Asn-655. The cysteines at positions 725 and 732 are disulfide-linked. Asn-749 and Asn-890 each carry an N-linked (GlcNAc...) asparagine glycan.

Belongs to the peptidase M1 family. In terms of assembly, monomer. May also exist as a heterodimer; with ERAP2. Interacts with RBMX. It depends on Zn(2+) as a cofactor. N-glycosylated. As to expression, ubiquitous.

Its subcellular location is the endoplasmic reticulum membrane. Its function is as follows. Aminopeptidase that plays a central role in peptide trimming, a step required for the generation of most HLA class I-binding peptides. Peptide trimming is essential to customize longer precursor peptides to fit them to the correct length required for presentation on MHC class I molecules. Strongly prefers substrates 9-16 residues long. Rapidly degrades 13-mer to a 9-mer and then stops. Preferentially hydrolyzes the residue Leu and peptides with a hydrophobic C-terminus, while it has weak activity toward peptides with charged C-terminus. May play a role in the inactivation of peptide hormones. May be involved in the regulation of blood pressure through the inactivation of angiotensin II and/or the generation of bradykinin in the kidney. This chain is Endoplasmic reticulum aminopeptidase 1 (Erap1), found in Rattus norvegicus (Rat).